The sequence spans 246 residues: MWIGVISLFPEMFKAITEFGVTGRAVKHNLLKVECWNPRNFTFDKHKTVDDRPYGGGPGMLMMVQPLRDAIHTAKAAAGEGAKVIYLSPQGRKLDQGGVTELAQNQKLILVCGRYEGIDERLIQTEIDEEWSIGDYVLTGGELPAMTLIDAVARFIPGVLGKQASAEEDSFADGLLDCPHYTRPEVLEGLTVPPVLMSGHHEEIRKWRLKQSLQRTWLRRPELLEGLALTDEQRKLLKEAQAEHNS.

S-adenosyl-L-methionine contacts are provided by residues G113 and 133–138; that span reads IGDYVL.

It belongs to the RNA methyltransferase TrmD family. In terms of assembly, homodimer.

The protein resides in the cytoplasm. It carries out the reaction guanosine(37) in tRNA + S-adenosyl-L-methionine = N(1)-methylguanosine(37) in tRNA + S-adenosyl-L-homocysteine + H(+). Specifically methylates guanosine-37 in various tRNAs. The chain is tRNA (guanine-N(1)-)-methyltransferase from Haemophilus influenzae (strain PittEE).